A 630-amino-acid polypeptide reads, in one-letter code: 1,4-alpha-glucan branching enzyme GlgB (630 aa).

Catalysis depends on Asp-311, which acts as the Nucleophile. Residue Glu-362 is the Proton donor of the active site.

It belongs to the glycosyl hydrolase 13 family. GlgB subfamily. Monomer.

It catalyses the reaction Transfers a segment of a (1-&gt;4)-alpha-D-glucan chain to a primary hydroxy group in a similar glucan chain.. It participates in glycan biosynthesis; glycogen biosynthesis. Its function is as follows. Catalyzes the formation of the alpha-1,6-glucosidic linkages in glycogen by scission of a 1,4-alpha-linked oligosaccharide from growing alpha-1,4-glucan chains and the subsequent attachment of the oligosaccharide to the alpha-1,6 position. This chain is 1,4-alpha-glucan branching enzyme GlgB, found in Aquifex aeolicus (strain VF5).